Consider the following 621-residue polypeptide: (-)-beta-phellandrene synthase 1, chloroplastic (621 aa).

The N-terminal 49 residues, methionine 1–arginine 49, are a transit peptide targeting the chloroplast. Mg(2+) contacts are provided by aspartate 372, aspartate 376, and aspartate 524. The DDXXD motif signature appears at aspartate 372–aspartate 376.

Belongs to the terpene synthase family. Tpsd subfamily. Requires Mg(2+) as cofactor. The cofactor is Mn(2+).

The protein localises to the plastid. It is found in the chloroplast. The catalysed reaction is (2E)-geranyl diphosphate = (-)-beta-phellandrene + diphosphate. Its pathway is terpene metabolism; oleoresin biosynthesis. It participates in secondary metabolite biosynthesis; terpenoid biosynthesis. Monoterpene synthase (TPS) involved in the biosynthesis of monoterpene natural products included in conifer oleoresin secretions and volatile emissions; these compounds contribute to biotic and abiotic stress defense against herbivores and pathogens. Catalyzes the conversion of (2E)-geranyl diphosphate (GPP) to (-)-beta-phellandrene and, to a lower extent, to (-)-alpha-phellandrene. This chain is (-)-beta-phellandrene synthase 1, chloroplastic, found in Pinus contorta (Shore pine).